The chain runs to 882 residues: Pyruvate dehydrogenase E1 component (882 aa).

As to quaternary structure, homodimer. Part of the PDH complex, consisting of multiple copies of pyruvate dehydrogenase (E1), dihydrolipoamide acetyltransferase (E2) and lipoamide dehydrogenase (E3). It depends on thiamine diphosphate as a cofactor.

It catalyses the reaction N(6)-[(R)-lipoyl]-L-lysyl-[protein] + pyruvate + H(+) = N(6)-[(R)-S(8)-acetyldihydrolipoyl]-L-lysyl-[protein] + CO2. Its function is as follows. Component of the pyruvate dehydrogenase (PDH) complex, that catalyzes the overall conversion of pyruvate to acetyl-CoA and CO(2). This Pseudomonas aeruginosa (strain ATCC 15692 / DSM 22644 / CIP 104116 / JCM 14847 / LMG 12228 / 1C / PRS 101 / PAO1) protein is Pyruvate dehydrogenase E1 component (aceE).